A 433-amino-acid polypeptide reads, in one-letter code: 23S rRNA (uracil(1939)-C(5))-methyltransferase RlmD (433 aa).

The TRAM domain occupies 1 to 53; it reads MPVAVIESLDHEGRGVAHVDGKVVFVEGALAGEQVEYTVYRQRPSYDLAEATR. Residues Cys66, Cys72, Cys75, and Cys154 each coordinate [4Fe-4S] cluster. 6 residues coordinate S-adenosyl-L-methionine: Gln263, Phe292, Asn297, Glu313, Asn341, and Asp362. Cys389 acts as the Nucleophile in catalysis.

This sequence belongs to the class I-like SAM-binding methyltransferase superfamily. RNA M5U methyltransferase family. RlmD subfamily.

It catalyses the reaction uridine(1939) in 23S rRNA + S-adenosyl-L-methionine = 5-methyluridine(1939) in 23S rRNA + S-adenosyl-L-homocysteine + H(+). In terms of biological role, catalyzes the formation of 5-methyl-uridine at position 1939 (m5U1939) in 23S rRNA. The chain is 23S rRNA (uracil(1939)-C(5))-methyltransferase RlmD from Aromatoleum aromaticum (strain DSM 19018 / LMG 30748 / EbN1) (Azoarcus sp. (strain EbN1)).